Consider the following 129-residue polypeptide: MNDLINFEIVTPLGVIYQGEVKSVTLPGSEGEFGVLKGHATLVSSLKSGVIDIEKADLNHELIAIDAGHAKVDEDKICVLAKGAVWVCGSDESEIEKNLAQAKDLIKSMSSDNAALAATFSKLDNARMH.

Belongs to the ATPase epsilon chain family. As to quaternary structure, F-type ATPases have 2 components, CF(1) - the catalytic core - and CF(0) - the membrane proton channel. CF(1) has five subunits: alpha(3), beta(3), gamma(1), delta(1), epsilon(1). CF(0) has three main subunits: a, b and c.

It localises to the cell inner membrane. Its function is as follows. Produces ATP from ADP in the presence of a proton gradient across the membrane. In Campylobacter jejuni subsp. jejuni serotype O:6 (strain 81116 / NCTC 11828), this protein is ATP synthase epsilon chain.